We begin with the raw amino-acid sequence, 291 residues long: Nucleotide-binding protein Cthe_0113 (291 aa).

8–15 (GISGAGKS) provides a ligand contact to ATP. Residue 59–62 (DIRG) participates in GTP binding.

The protein belongs to the RapZ-like family.

Displays ATPase and GTPase activities. The chain is Nucleotide-binding protein Cthe_0113 from Acetivibrio thermocellus (strain ATCC 27405 / DSM 1237 / JCM 9322 / NBRC 103400 / NCIMB 10682 / NRRL B-4536 / VPI 7372) (Clostridium thermocellum).